A 493-amino-acid chain; its full sequence is Glutamyl-tRNA(Gln) amidotransferase subunit A (493 aa).

Active-site charge relay system residues include K78 and S158. S182 serves as the catalytic Acyl-ester intermediate.

This sequence belongs to the amidase family. GatA subfamily. In terms of assembly, heterotrimer of A, B and C subunits.

The enzyme catalyses L-glutamyl-tRNA(Gln) + L-glutamine + ATP + H2O = L-glutaminyl-tRNA(Gln) + L-glutamate + ADP + phosphate + H(+). In terms of biological role, allows the formation of correctly charged Gln-tRNA(Gln) through the transamidation of misacylated Glu-tRNA(Gln) in organisms which lack glutaminyl-tRNA synthetase. The reaction takes place in the presence of glutamine and ATP through an activated gamma-phospho-Glu-tRNA(Gln). This Methylorubrum extorquens (strain PA1) (Methylobacterium extorquens) protein is Glutamyl-tRNA(Gln) amidotransferase subunit A.